The primary structure comprises 224 residues: Putative ankyrin repeat protein R845 (224 aa).

8 ANK repeats span residues 1–14, 15–44, 46–74, 75–104, 105–134, 136–164, 165–194, and 196–224; these read MVEYLVSLGADVRS, NYDHAIKSAFENGHLQVIKYLISLGSDVSM, YDYILLRASRNGYIDVVKYLIEQGVDPRT, NNDKAVRKASKNGRLEIVEYLVTLGADIRI, DNDSAVRWASKNGHIKTVEFLVAKGADIRA, NDYSLRHSSKHGHIKMVEYLVAQGADVRA, DNDYAIKWASGKGHLEVVKYLVEKGADFRA, and NDCAVKWASQTGRVEIVEYLVSKGAVCPY.

The protein is Putative ankyrin repeat protein R845 of Acanthamoeba polyphaga mimivirus (APMV).